Reading from the N-terminus, the 467-residue chain is Glutamate--tRNA ligase (467 aa).

A 'HIGH' region motif is present at residues 9–19 (PSPTGYLHIGG). A 'KMSKS' region motif is present at residues 237 to 241 (KLSKR). Lys240 provides a ligand contact to ATP.

This sequence belongs to the class-I aminoacyl-tRNA synthetase family. Glutamate--tRNA ligase type 1 subfamily. In terms of assembly, monomer.

It localises to the cytoplasm. It catalyses the reaction tRNA(Glu) + L-glutamate + ATP = L-glutamyl-tRNA(Glu) + AMP + diphosphate. Its function is as follows. Catalyzes the attachment of glutamate to tRNA(Glu) in a two-step reaction: glutamate is first activated by ATP to form Glu-AMP and then transferred to the acceptor end of tRNA(Glu). This chain is Glutamate--tRNA ligase, found in Xanthomonas axonopodis pv. citri (strain 306).